We begin with the raw amino-acid sequence, 129 residues long: Protein RfbJ (129 aa).

It belongs to the glycosyltransferase 2 family.

The protein operates within bacterial outer membrane biogenesis; lipopolysaccharide biosynthesis. This Shigella flexneri protein is Protein RfbJ (rfbJ).